A 515-amino-acid chain; its full sequence is Ent-isokaurene C2/C3-hydroxylase (515 aa).

Residues 5-25 (LILDLCLSALFVVVLSKLVSS) form a helical membrane-spanning segment. Cys-452 is a heme binding site.

The protein belongs to the cytochrome P450 family. Requires heme as cofactor.

It localises to the membrane. It carries out the reaction ent-isokaurene + 2 reduced [NADPH--hemoprotein reductase] + 2 O2 = ent-isokaurene-2beta,3beta-diol + 2 oxidized [NADPH--hemoprotein reductase] + 2 H2O + 2 H(+). In terms of biological role, enzyme of the diterpenoid metabolism involved in the biosynthesis of antibacterial oryzalides such as phytocassane. The protein is Ent-isokaurene C2/C3-hydroxylase (CYP71Z6) of Oryza sativa subsp. japonica (Rice).